The sequence spans 89 residues: Large ribosomal subunit protein bL27 (89 aa).

This sequence belongs to the bacterial ribosomal protein bL27 family.

The chain is Large ribosomal subunit protein bL27 from Ruegeria sp. (strain TM1040) (Silicibacter sp.).